The chain runs to 541 residues: Arginine--tRNA ligase (541 aa).

Residues 119–129 carry the 'HIGH' region motif; that stretch reads ANPTGPLHIGH.

It belongs to the class-I aminoacyl-tRNA synthetase family. Monomer.

The protein localises to the cytoplasm. The catalysed reaction is tRNA(Arg) + L-arginine + ATP = L-arginyl-tRNA(Arg) + AMP + diphosphate. The chain is Arginine--tRNA ligase from Helicobacter pylori (strain G27).